The sequence spans 210 residues: Protein GrpE (210 aa).

This sequence belongs to the GrpE family. As to quaternary structure, homodimer.

The protein localises to the cytoplasm. In terms of biological role, participates actively in the response to hyperosmotic and heat shock by preventing the aggregation of stress-denatured proteins, in association with DnaK and GrpE. It is the nucleotide exchange factor for DnaK and may function as a thermosensor. Unfolded proteins bind initially to DnaJ; upon interaction with the DnaJ-bound protein, DnaK hydrolyzes its bound ATP, resulting in the formation of a stable complex. GrpE releases ADP from DnaK; ATP binding to DnaK triggers the release of the substrate protein, thus completing the reaction cycle. Several rounds of ATP-dependent interactions between DnaJ, DnaK and GrpE are required for fully efficient folding. This chain is Protein GrpE, found in Rhizobium leguminosarum bv. trifolii (strain WSM2304).